The chain runs to 267 residues: Putative carbamate hydrolase RutD (267 aa).

Residues 23–139 (VVLLSSGLGG…IQRCFDTRIH (117 aa)) enclose the AB hydrolase-1 domain.

Belongs to the AB hydrolase superfamily. Hydrolase RutD family.

The catalysed reaction is carbamate + 2 H(+) = NH4(+) + CO2. Its function is as follows. Involved in pyrimidine catabolism. May facilitate the hydrolysis of carbamate, a reaction that can also occur spontaneously. This Caulobacter segnis (strain ATCC 21756 / DSM 7131 / JCM 7823 / NBRC 15250 / LMG 17158 / TK0059) (Mycoplana segnis) protein is Putative carbamate hydrolase RutD.